Here is a 117-residue protein sequence, read N- to C-terminus: Large ribosomal subunit protein bL20 (117 aa).

Belongs to the bacterial ribosomal protein bL20 family.

Its function is as follows. Binds directly to 23S ribosomal RNA and is necessary for the in vitro assembly process of the 50S ribosomal subunit. It is not involved in the protein synthesizing functions of that subunit. The protein is Large ribosomal subunit protein bL20 of Nitratidesulfovibrio vulgaris (strain DP4) (Desulfovibrio vulgaris).